The chain runs to 746 residues: MAPSYEHLREADLDEDEFDEDEVDVSDLREKFEVQLEQGFDTFVVIDGLPEVTEEQKPKLVKFLLKKLTSVGKTKEDMIDMPMGPDGKSLRFAFVEYSSPGEAAAAVRQLDRVPLDKKHTLRVNKLMDVDRFGREGRIDDEYQPPHIDEFHPRDHLRSFMADPSGRGRDQFVMFRGDHVGVFWNNEKDTPENIVDRPNWTESFVQWSPLGTYLLSMHMQGVQLWGGPKWDRLGRFPHPFVNMAAFSPQENYLVTWSNRPISIPDEGHPALSMDDDGKNYVIWDIATGKPLRSFANLDLPPDDPNKPPRKHPWPAFKWSSDDKYVARLTQGQSISVYELPRMNLLDKTTIKVEGVQDFEWAPSRPQRDGVKTYEQMFCYWTPEIGSNPAKVGLMSIPSKEVVRSLNLFSVSDVKLHWQSEGAYLCVKVDRHSKSKKSQATTLEIFRVKEKGVPVEVVDTIKDTVINFAWEPKGDRFLIITTVTPTGEVAVQPKTAISFFCPEKSKGSTVGNFKHLRTLDKRNSNAIYWSPKGRFVVVATVHNQNSSDLDFFDLDFEGEKPEGEKDLTANLQLMNTADHYGITDVEWDPSGRFVATWASAWKHTMENGYHMYDFKGEQLREEAVEKFKQLQWRPRPPTLLAKEEQKQIRKNLREYSRVFEQEDAERIAGADQEVVDNRRRILEDWYEWRESVDVEVDEESAAMGVSSNPAEELLKAKTAEILASGQEEEQVIEEIVEEVLEESEEIVS.

A compositionally biased stretch (basic and acidic residues) spans 1–11 (MAPSYEHLREA). The disordered stretch occupies residues 1–20 (MAPSYEHLREADLDEDEFDE). The region spanning 42-128 (TFVVIDGLPE…HTLRVNKLMD (87 aa)) is the RRM domain. WD repeat units follow at residues 195 to 234 (DRPN…RLGR), 247 to 294 (PQEN…RSFA), 307 to 346 (PRKH…LLDK), 349 to 386 (IKVE…IGSN), 458 to 500 (TIKD…FFCP), 517 to 560 (LDKR…EKPE), and 575 to 620 (ADHY…LREE).

This sequence belongs to the eIF-3 subunit B family. In terms of assembly, component of the eukaryotic translation initiation factor 3 (eIF-3) complex.

The protein resides in the cytoplasm. In terms of biological role, RNA-binding component of the eukaryotic translation initiation factor 3 (eIF-3) complex, which is involved in protein synthesis of a specialized repertoire of mRNAs and, together with other initiation factors, stimulates binding of mRNA and methionyl-tRNAi to the 40S ribosome. The eIF-3 complex specifically targets and initiates translation of a subset of mRNAs involved in cell proliferation. This chain is Eukaryotic translation initiation factor 3 subunit B, found in Pyricularia oryzae (strain 70-15 / ATCC MYA-4617 / FGSC 8958) (Rice blast fungus).